Consider the following 71-residue polypeptide: Sec-independent protein translocase protein TatA (71 aa).

A helical membrane pass occupies residues 1-21 (MGASPVQLLIVLFIAVLVFGG).

The protein belongs to the TatA/E family. The Tat system comprises two distinct complexes: a TatABC complex, containing multiple copies of TatA, TatB and TatC subunits, and a separate TatA complex, containing only TatA subunits. Substrates initially bind to the TatABC complex, which probably triggers association of the separate TatA complex to form the active translocon.

It is found in the cell inner membrane. In terms of biological role, part of the twin-arginine translocation (Tat) system that transports large folded proteins containing a characteristic twin-arginine motif in their signal peptide across membranes. TatA could form the protein-conducting channel of the Tat system. This is Sec-independent protein translocase protein TatA from Dichelobacter nodosus (strain VCS1703A).